The sequence spans 460 residues: Bifunctional protein GlmU (460 aa).

The segment at 1–229 (MSNYAIILAA…FEESLGVNDR (229 aa)) is pyrophosphorylase. Residues 8-11 (LAAG), lysine 22, glutamine 72, and 77-78 (GT) each bind UDP-N-acetyl-alpha-D-glucosamine. Residue aspartate 102 coordinates Mg(2+). 4 residues coordinate UDP-N-acetyl-alpha-D-glucosamine: glycine 139, glutamate 154, asparagine 169, and asparagine 227. Asparagine 227 contributes to the Mg(2+) binding site. The linker stretch occupies residues 230-250 (VALATAEDVMRRRINKTHMIN). The interval 251-460 (GVTFQNPNAT…KKPHHPSQQK (210 aa)) is N-acetyltransferase. UDP-N-acetyl-alpha-D-glucosamine contacts are provided by arginine 332 and lysine 350. Histidine 362 acts as the Proton acceptor in catalysis. 2 residues coordinate UDP-N-acetyl-alpha-D-glucosamine: tyrosine 365 and asparagine 376. Residues alanine 379, 385–386 (NY), serine 404, alanine 422, and arginine 439 contribute to the acetyl-CoA site.

The protein in the N-terminal section; belongs to the N-acetylglucosamine-1-phosphate uridyltransferase family. This sequence in the C-terminal section; belongs to the transferase hexapeptide repeat family. As to quaternary structure, homotrimer. It depends on Mg(2+) as a cofactor.

It is found in the cytoplasm. The enzyme catalyses alpha-D-glucosamine 1-phosphate + acetyl-CoA = N-acetyl-alpha-D-glucosamine 1-phosphate + CoA + H(+). It catalyses the reaction N-acetyl-alpha-D-glucosamine 1-phosphate + UTP + H(+) = UDP-N-acetyl-alpha-D-glucosamine + diphosphate. The protein operates within nucleotide-sugar biosynthesis; UDP-N-acetyl-alpha-D-glucosamine biosynthesis; N-acetyl-alpha-D-glucosamine 1-phosphate from alpha-D-glucosamine 6-phosphate (route II): step 2/2. It participates in nucleotide-sugar biosynthesis; UDP-N-acetyl-alpha-D-glucosamine biosynthesis; UDP-N-acetyl-alpha-D-glucosamine from N-acetyl-alpha-D-glucosamine 1-phosphate: step 1/1. Its pathway is bacterial outer membrane biogenesis; LPS lipid A biosynthesis. Its function is as follows. Catalyzes the last two sequential reactions in the de novo biosynthetic pathway for UDP-N-acetylglucosamine (UDP-GlcNAc). The C-terminal domain catalyzes the transfer of acetyl group from acetyl coenzyme A to glucosamine-1-phosphate (GlcN-1-P) to produce N-acetylglucosamine-1-phosphate (GlcNAc-1-P), which is converted into UDP-GlcNAc by the transfer of uridine 5-monophosphate (from uridine 5-triphosphate), a reaction catalyzed by the N-terminal domain. In Streptococcus thermophilus (strain ATCC BAA-491 / LMD-9), this protein is Bifunctional protein GlmU.